A 938-amino-acid polypeptide reads, in one-letter code: Catenin delta-1 (938 aa).

Methionine 1 carries the N-acetylmethionine modification. Positions 1 to 357 (MDDSEVESTA…ASLDSLRKGM (357 aa)) are necessary and sufficient for interaction with CCDC85B. Residue serine 4 is modified to Phosphoserine. The stretch at 10–46 (ASILASVKEQEAQFEKLTRALEEERRHVSAQLERVRV) forms a coiled coil. Serine 47 is subject to Phosphoserine. A Phosphothreonine modification is found at threonine 59. Tyrosine 112 bears the Phosphotyrosine; by FYN mark. Serine 125 carries the phosphoserine modification. Phosphotyrosine is present on residues tyrosine 217 and tyrosine 221. Serine 225 bears the Phosphoserine mark. A Phosphotyrosine modification is found at tyrosine 228. Phosphoserine is present on residues serine 230 and serine 252. Tyrosine 257 is subject to Phosphotyrosine. Phosphoserine occurs at positions 268 and 269. Tyrosine 280 is subject to Phosphotyrosine. Phosphoserine is present on serine 288. Residue tyrosine 291 is modified to Phosphotyrosine. Position 300 is a phosphoserine (serine 300). Threonine 304 is modified (phosphothreonine). 4 positions are modified to phosphoserine: serine 320, serine 346, serine 349, and serine 352. ARM repeat units lie at residues 358-395 (PPPS…HLCY), 398-437 (DKVK…NISF), 441-475 (QDNK…ITGT), and 476-516 (LWNL…NEDC). Lysine 421 participates in a covalent cross-link: Glycyl lysine isopeptide (Lys-Gly) (interchain with G-Cter in SUMO2). A Glycyl lysine isopeptide (Lys-Gly) (interchain with G-Cter in SUMO2) cross-link involves residue lysine 517. 6 ARM repeats span residues 534–573 (LRNV…DSDS), 583–624 (LRNL…AKKG), 653–693 (ARGY…NLCA), 700–739 (RYIR…NLAV), 740–780 (DARN…SILN), and 781–826 (TINE…ALVL). At serine 617 the chain carries Phosphoserine. Positions 622-629 (KKGKDEWF) match the Nuclear localization signal (NLS) motif. Serine 713 carries the post-translational modification Phosphoserine. A phosphoserine mark is found at serine 811, serine 847, serine 857, serine 859, serine 861, and serine 864. The interval 855-938 (NASRSQSSHS…LKGAPLMQKI (84 aa)) is disordered. The residue at position 865 (tyrosine 865) is a Phosphotyrosine. Residue serine 868 is modified to Phosphoserine. Phosphothreonine is present on threonine 869. Basic and acidic residues predominate over residues 875 to 888 (RNQKSDKKPDREEI). Phosphoserine is present on serine 879. Lysine 882 participates in a covalent cross-link: Glycyl lysine isopeptide (Lys-Gly) (interchain with G-Cter in SUMO2). Residues 892–908 (NMGSNTKSLDNNYSTLN) show a composition bias toward polar residues. The residue at position 899 (serine 899) is a Phosphoserine. Tyrosine 904 carries the phosphotyrosine modification. Residues threonine 906 and threonine 916 each carry the phosphothreonine modification. Positions 909-922 (ERGDHNRTLDRSGD) are enriched in basic and acidic residues. The residue at position 920 (serine 920) is a Phosphoserine.

This sequence belongs to the beta-catenin family. As to quaternary structure, belongs to a multiprotein cell-cell adhesion complex that also contains E-cadherin/CDH1, alpha-catenin/CTNNA1, beta-catenin/CTNNB1, and gamma-catenin/JUP. Binds to the C-terminal fragment of PSEN1 and mutually competes for CDH1. Interacts with ZBTB33. Interacts with GLIS2. Interacts with FER. Interacts with NANOS1 (via N-terminal region). Interacts (via N-terminus) with GNA12; the interaction regulates CDH1-mediated cell-cell adhesion. Interacts with GNA13. Component of a cadherin:catenin adhesion complex composed of at least of CDH26, beta-catenin/CTNNB1, alpha-catenin/CTNNA1 and p120 catenin/CTNND1. Interacts with CCDC85B. Interacts with PLPP3; negatively regulates the PLPP3-mediated stabilization of CTNNB1. Interacts with DSG3; the interaction facilitates DSG3 localization and retention at cell-cell junctions. Interacts with CTNND1/p120-catenin; the interaction controls CADH5 endocytosis. Post-translationally, phosphorylated by FER and other protein-tyrosine kinases. Phosphorylated at Ser-288 by PAK5. Dephosphorylated by PTPRJ. As to expression, expressed in basal keratinocytes (at protein level).

It is found in the cell junction. It localises to the adherens junction. The protein resides in the cytoplasm. The protein localises to the nucleus. Its subcellular location is the cell membrane. Functionally, key regulator of cell-cell adhesion that associates with and regulates the cell adhesion properties of both C-, E- and N-cadherins, being critical for their surface stability. Promotes localization and retention of DSG3 at cell-cell junctions, via its interaction with DSG3. Beside cell-cell adhesion, regulates gene transcription through several transcription factors including ZBTB33/Kaiso2 and GLIS2, and the activity of Rho family GTPases and downstream cytoskeletal dynamics. Implicated both in cell transformation by SRC and in ligand-induced receptor signaling through the EGF, PDGF, CSF-1 and ERBB2 receptors. The sequence is that of Catenin delta-1 (Ctnnd1) from Mus musculus (Mouse).